A 308-amino-acid polypeptide reads, in one-letter code: L-lactate dehydrogenase 2 (308 aa).

NAD(+)-binding positions include V14, D35, Y65, and 79–80 (GA). R88 contributes to the substrate binding site. S101 is an NAD(+) binding site. 120–123 (NPVD) is a binding site for substrate. T143 lines the NAD(+) pocket. 148-151 (DTAR) serves as a coordination point for substrate. The Proton acceptor role is filled by H175. T225 contributes to the substrate binding site.

Belongs to the LDH/MDH superfamily. LDH family. Homotetramer.

The protein localises to the cytoplasm. The enzyme catalyses (S)-lactate + NAD(+) = pyruvate + NADH + H(+). The protein operates within fermentation; pyruvate fermentation to lactate; (S)-lactate from pyruvate: step 1/1. Its function is as follows. Catalyzes the conversion of lactate to pyruvate. This Lactobacillus johnsonii (strain CNCM I-12250 / La1 / NCC 533) protein is L-lactate dehydrogenase 2.